The chain runs to 338 residues: DNA-directed RNA polymerase subunit alpha (338 aa).

Positions 1 to 234 (MIERNWNELI…DQLQIFITFE (234 aa)) are alpha N-terminal domain (alpha-NTD). Residues 250 to 338 (FNPALLKKVD…DLAKKFEDQI (89 aa)) form an alpha C-terminal domain (alpha-CTD) region.

It belongs to the RNA polymerase alpha chain family. In terms of assembly, homodimer. The RNAP catalytic core consists of 2 alpha, 1 beta, 1 beta' and 1 omega subunit. When a sigma factor is associated with the core the holoenzyme is formed, which can initiate transcription.

It catalyses the reaction RNA(n) + a ribonucleoside 5'-triphosphate = RNA(n+1) + diphosphate. Functionally, DNA-dependent RNA polymerase catalyzes the transcription of DNA into RNA using the four ribonucleoside triphosphates as substrates. This Caulobacter sp. (strain K31) protein is DNA-directed RNA polymerase subunit alpha.